We begin with the raw amino-acid sequence, 133 residues long: Small ribosomal subunit protein uS8 (133 aa).

Belongs to the universal ribosomal protein uS8 family. In terms of assembly, part of the 30S ribosomal subunit. Contacts proteins S5 and S12.

In terms of biological role, one of the primary rRNA binding proteins, it binds directly to 16S rRNA central domain where it helps coordinate assembly of the platform of the 30S subunit. The polypeptide is Small ribosomal subunit protein uS8 (Rippkaea orientalis (strain PCC 8801 / RF-1) (Cyanothece sp. (strain PCC 8801))).